Here is a 287-residue protein sequence, read N- to C-terminus: Protoheme IX farnesyltransferase (287 aa).

7 helical membrane-spanning segments follow: residues 19-39, 100-120, 134-154, 162-182, 212-232, 233-253, and 267-287; these read LMVA…VTIT, MVLC…IVAV, FALL…WLAV, MLVV…WLHA, VWFH…LLEG, VGMR…AMLA, and VLCA…VSLF.

The protein belongs to the UbiA prenyltransferase family. Protoheme IX farnesyltransferase subfamily.

Its subcellular location is the cell inner membrane. It catalyses the reaction heme b + (2E,6E)-farnesyl diphosphate + H2O = Fe(II)-heme o + diphosphate. Its pathway is porphyrin-containing compound metabolism; heme O biosynthesis; heme O from protoheme: step 1/1. In terms of biological role, converts heme B (protoheme IX) to heme O by substitution of the vinyl group on carbon 2 of heme B porphyrin ring with a hydroxyethyl farnesyl side group. The sequence is that of Protoheme IX farnesyltransferase from Nitratidesulfovibrio vulgaris (strain DP4) (Desulfovibrio vulgaris).